A 230-amino-acid polypeptide reads, in one-letter code: Ribonuclease 3 (230 aa).

One can recognise an RNase III domain in the interval 5–134 (EALLENSFNI…FLGALLLDKG (130 aa)). Glu-47 is a binding site for Mg(2+). Asp-51 is an active-site residue. Mg(2+)-binding residues include Asp-120 and Glu-123. Glu-123 is a catalytic residue. The region spanning 160–229 (DYKTCLQELL…AKNALAQLSE (70 aa)) is the DRBM domain.

It belongs to the ribonuclease III family. In terms of assembly, homodimer. Mg(2+) serves as cofactor.

It localises to the cytoplasm. The catalysed reaction is Endonucleolytic cleavage to 5'-phosphomonoester.. Functionally, digests double-stranded RNA. Involved in the processing of primary rRNA transcript to yield the immediate precursors to the large and small rRNAs (23S and 16S). Processes some mRNAs, and tRNAs when they are encoded in the rRNA operon. Processes pre-crRNA and tracrRNA of type II CRISPR loci if present in the organism. This Streptococcus equi subsp. zooepidemicus (strain H70) protein is Ribonuclease 3.